The chain runs to 146 residues: Meiotically up-regulated gene 96 protein (146 aa).

The chain crosses the membrane as a helical span at residues leucine 85 to tryptophan 104.

The protein resides in the cytoplasm. It is found in the membrane. In terms of biological role, has a role in meiosis. The sequence is that of Meiotically up-regulated gene 96 protein (mug96) from Schizosaccharomyces pombe (strain 972 / ATCC 24843) (Fission yeast).